Consider the following 156-residue polypeptide: Small ribosomal subunit protein uS7c (156 aa).

Belongs to the universal ribosomal protein uS7 family. In terms of assembly, part of the 30S ribosomal subunit.

The protein localises to the plastid. The protein resides in the chloroplast. One of the primary rRNA binding proteins, it binds directly to 16S rRNA where it nucleates assembly of the head domain of the 30S subunit. The chain is Small ribosomal subunit protein uS7c (rps7) from Nephroselmis olivacea (Green alga).